A 3093-amino-acid chain; its full sequence is Intermembrane lipid transfer protein VPS13A (3093 aa).

The Chorein N-terminal domain maps to 3 to 116 (FESVVVDVLN…LMEAKQQELK (114 aa)). Residues 373–406 (LTSKKPPGELLVSLEELEKTLDVLNITIARQQAE) form a TPR 1 repeat. A Phosphoserine modification is found at Ser839. An FFAT motif is present at residues 842–848 (EFFDAPC). Ser1416 bears the Phosphoserine mark. Positions 2209 to 2454 (VAFHSPYWMV…VFYTWADPVG (246 aa)) constitute an SHR-BD domain. The TPR 2 repeat unit spans residues 2860-2898 (ILGLDVLGNPFGLIREFSEGVEAFFYEPYQGAIQGPEEF). A required for lipid droplet localization region spans residues 2953 to 3027 (PAGFREGITR…SSTFQGIKRA (75 aa)).

This sequence belongs to the VPS13 family. In terms of assembly, interacts (via FFAT motif) with VAPA and VAPB. Interacts with RAB7A. Interacts with XK.

The protein resides in the mitochondrion outer membrane. The protein localises to the endoplasmic reticulum membrane. It is found in the endosome membrane. Its subcellular location is the lysosome membrane. It localises to the lipid droplet. The protein resides in the golgi apparatus. The protein localises to the cytoplasmic vesicle. It is found in the secretory vesicle. Its subcellular location is the neuronal dense core vesicle. Mediates the transfer of lipids between membranes at organelle contact sites. Required for the formation or stabilization of ER-mitochondria contact sites which enable transfer of lipids between the ER and mitochondria. Negatively regulates lipid droplet size and motility. Required for efficient lysosomal protein degradation. This Macaca fascicularis (Crab-eating macaque) protein is Intermembrane lipid transfer protein VPS13A (VPS13A).